Here is a 324-residue protein sequence, read N- to C-terminus: MSLYMLVSTFAVAFIITVIGVPLFIPFLVKLKFGQSIRDEGPKMHEKKSGTPTMGAVVFITAMLISFLVFSFISGEVSAATWLLFIALALFGALGFLDDYIKVVQKRNLGLTSKQKFLGQVVISILFYLVYHFNDFAETLNIPFTNIEVDLGWFFVIFILFWLVGFSNAVNLTDGLDGLVSGLSVIAFSAFGVIAFYQEQMDVAIFCFAIVGGMLGFLLFNKNPAKIFMGDTGSLALGGSIAAISILVHQEWLLLLIGIIFVIETASVILQVFYFKATGGKRIFRMTPIHHHFELGGWSEWRVVLTFWGIGLVGAIISVCVVIF.

The next 10 membrane-spanning stretches (helical) occupy residues Thr9–Val29, Thr53–Ile73, Val77–Leu97, Phe117–Ala137, Ile147–Ser167, Leu176–Phe196, Met201–Asn221, Ile227–Leu247, Leu253–Phe273, and Val304–Phe324.

Belongs to the glycosyltransferase 4 family. MraY subfamily. Mg(2+) is required as a cofactor.

The protein resides in the cell membrane. It carries out the reaction UDP-N-acetyl-alpha-D-muramoyl-L-alanyl-gamma-D-glutamyl-meso-2,6-diaminopimeloyl-D-alanyl-D-alanine + di-trans,octa-cis-undecaprenyl phosphate = di-trans,octa-cis-undecaprenyl diphospho-N-acetyl-alpha-D-muramoyl-L-alanyl-D-glutamyl-meso-2,6-diaminopimeloyl-D-alanyl-D-alanine + UMP. It participates in cell wall biogenesis; peptidoglycan biosynthesis. Catalyzes the initial step of the lipid cycle reactions in the biosynthesis of the cell wall peptidoglycan: transfers peptidoglycan precursor phospho-MurNAc-pentapeptide from UDP-MurNAc-pentapeptide onto the lipid carrier undecaprenyl phosphate, yielding undecaprenyl-pyrophosphoryl-MurNAc-pentapeptide, known as lipid I. The chain is Phospho-N-acetylmuramoyl-pentapeptide-transferase from Listeria monocytogenes serovar 1/2a (strain ATCC BAA-679 / EGD-e).